A 257-amino-acid polypeptide reads, in one-letter code: 3-methyl-2-oxobutanoate hydroxymethyltransferase (257 aa).

2 residues coordinate Mg(2+): aspartate 42 and aspartate 86. 3-methyl-2-oxobutanoate contacts are provided by residues 42-43, aspartate 86, and lysine 116; that span reads DS. Residue glutamate 118 participates in Mg(2+) binding. Glutamate 185 (proton acceptor) is an active-site residue.

This sequence belongs to the PanB family. As to quaternary structure, homodecamer; pentamer of dimers. It depends on Mg(2+) as a cofactor.

Its subcellular location is the cytoplasm. The enzyme catalyses 3-methyl-2-oxobutanoate + (6R)-5,10-methylene-5,6,7,8-tetrahydrofolate + H2O = 2-dehydropantoate + (6S)-5,6,7,8-tetrahydrofolate. The protein operates within cofactor biosynthesis; (R)-pantothenate biosynthesis; (R)-pantoate from 3-methyl-2-oxobutanoate: step 1/2. Functionally, catalyzes the reversible reaction in which hydroxymethyl group from 5,10-methylenetetrahydrofolate is transferred onto alpha-ketoisovalerate to form ketopantoate. The sequence is that of 3-methyl-2-oxobutanoate hydroxymethyltransferase from Prochlorococcus marinus (strain MIT 9515).